The following is a 248-amino-acid chain: Proteasome subunit alpha (248 aa).

It belongs to the peptidase T1A family. In terms of assembly, the 20S proteasome core is composed of 14 alpha and 14 beta subunits that assemble into four stacked heptameric rings, resulting in a barrel-shaped structure. The two inner rings, each composed of seven catalytic beta subunits, are sandwiched by two outer rings, each composed of seven alpha subunits. The catalytic chamber with the active sites is on the inside of the barrel. Has a gated structure, the ends of the cylinder being occluded by the N-termini of the alpha-subunits. Is capped at one or both ends by the proteasome regulatory ATPase, PAN.

Its subcellular location is the cytoplasm. The formation of the proteasomal ATPase PAN-20S proteasome complex, via the docking of the C-termini of PAN into the intersubunit pockets in the alpha-rings, triggers opening of the gate for substrate entry. Interconversion between the open-gate and close-gate conformations leads to a dynamic regulation of the 20S proteasome proteolysis activity. Functionally, component of the proteasome core, a large protease complex with broad specificity involved in protein degradation. In Methanothermobacter thermautotrophicus (strain ATCC 29096 / DSM 1053 / JCM 10044 / NBRC 100330 / Delta H) (Methanobacterium thermoautotrophicum), this protein is Proteasome subunit alpha.